Consider the following 286-residue polypeptide: Ribosomal RNA small subunit methyltransferase A (286 aa).

S-adenosyl-L-methionine is bound by residues asparagine 28, leucine 30, glycine 55, glutamate 77, aspartate 103, and asparagine 123.

This sequence belongs to the class I-like SAM-binding methyltransferase superfamily. rRNA adenine N(6)-methyltransferase family. RsmA subfamily.

It localises to the cytoplasm. It carries out the reaction adenosine(1518)/adenosine(1519) in 16S rRNA + 4 S-adenosyl-L-methionine = N(6)-dimethyladenosine(1518)/N(6)-dimethyladenosine(1519) in 16S rRNA + 4 S-adenosyl-L-homocysteine + 4 H(+). Its function is as follows. Specifically dimethylates two adjacent adenosines (A1518 and A1519) in the loop of a conserved hairpin near the 3'-end of 16S rRNA in the 30S particle. May play a critical role in biogenesis of 30S subunits. This Rhodopseudomonas palustris (strain BisB18) protein is Ribosomal RNA small subunit methyltransferase A.